A 243-amino-acid polypeptide reads, in one-letter code: L-fucose operon activator (243 aa).

Positions 1–57 (MKAARQQAIVDLLLNHTSLTTEALSEQLKVSKETIRRDLNELQTQGKILRNHGRAKY) constitute an HTH deoR-type domain. Positions 19-38 (LTTEALSEQLKVSKETIRRD) form a DNA-binding region, H-T-H motif.

In terms of biological role, transcriptional activator of the fuc operon. The chain is L-fucose operon activator (fucR) from Escherichia coli (strain K12).